The sequence spans 587 residues: Polyadenylate-binding protein-interacting protein 3 (587 aa).

The Sm domain maps to L51 to P132. A disordered region spans residues A422–G503. The segment covering P431–E464 has biased composition (low complexity). A PAM2-like 1; degenerate motif is present at residues T467–F475. Residues K476 to P486 carry the PAM2-like 2 motif. A compositionally biased stretch (polar residues) spans P486–S498.

The polypeptide is Polyadenylate-binding protein-interacting protein 3 (CID3) (Arabidopsis thaliana (Mouse-ear cress)).